The sequence spans 569 residues: Phenylalanine ammonia-lyase (569 aa).

Y78 functions as the Proton donor/acceptor in the catalytic mechanism. Residues 167–169 (ASG) constitute a cross-link (5-imidazolinone (Ala-Gly)). S168 is subject to 2,3-didehydroalanine (Ser). The (E)-cinnamate site is built by N223, Q311, R317, N347, K419, E448, and N451.

The protein belongs to the PAL/histidase family. Homotetramer. In terms of processing, contains an active site 4-methylidene-imidazol-5-one (MIO), which is formed autocatalytically by cyclization and dehydration of residues Ala-Ser-Gly.

It is found in the cytoplasm. The enzyme catalyses L-phenylalanine = (E)-cinnamate + NH4(+). It functions in the pathway phenylpropanoid metabolism; trans-cinnamate biosynthesis; trans-cinnamate from L-phenylalanine: step 1/1. In terms of biological role, catalyzes the non-oxidative deamination of L-phenylalanine to form trans-cinnamic acid, the first step in the phenylpropanoid pathway. This chain is Phenylalanine ammonia-lyase, found in Nostoc punctiforme (strain ATCC 29133 / PCC 73102).